Reading from the N-terminus, the 399-residue chain is MTDFNQAFAELKRGAEEILVEEELLTKLKTGKPLKIKAGFDPTAPDLHLGHTVLINKLRQFQQLGHEVIFLIGDFTGMIGDPTGKNVTRKALTKEDVLANAETYKEQVFKILDPAKTTVAFNSTWMDKLGAAGMLQLASRQTVARMMERDDFKKRYANGQAIAIHEFMYPLVQGWDSVALEADVELGGTDQKFNLLMGRELQKSEGQRPQTVLMMPLLEGLDGVQKMSKSLGNYIGITDTPTDMFGKIMSISDVLMWRYYELLSFKPLEEIEGYKTEIENGKNPRDVKIDLAKELIARFHDEAAAQAAHDEFINRFQKGALPDDMPELTITTENGEIAIANLLKDAGLVGSTSDAFRMIKQGAAKIDSEKVTDRSLVISAGTTAVYQVGKRKFARITVS.

The short motif at 42 to 51 (PTAPDLHLGH) is the 'HIGH' region element. The 'KMSKS' region signature appears at 226 to 230 (KMSKS). Lysine 229 serves as a coordination point for ATP. Residues 337–398 (IAIANLLKDA…GKRKFARITV (62 aa)) form the S4 RNA-binding domain.

This sequence belongs to the class-I aminoacyl-tRNA synthetase family. TyrS type 2 subfamily. Homodimer.

It is found in the cytoplasm. It carries out the reaction tRNA(Tyr) + L-tyrosine + ATP = L-tyrosyl-tRNA(Tyr) + AMP + diphosphate + H(+). In terms of biological role, catalyzes the attachment of tyrosine to tRNA(Tyr) in a two-step reaction: tyrosine is first activated by ATP to form Tyr-AMP and then transferred to the acceptor end of tRNA(Tyr). The polypeptide is Tyrosine--tRNA ligase (Colwellia psychrerythraea (strain 34H / ATCC BAA-681) (Vibrio psychroerythus)).